Consider the following 312-residue polypeptide: Methionyl-tRNA formyltransferase (312 aa).

109–112 (SLLP) is a binding site for (6S)-5,6,7,8-tetrahydrofolate.

The protein belongs to the Fmt family.

The catalysed reaction is L-methionyl-tRNA(fMet) + (6R)-10-formyltetrahydrofolate = N-formyl-L-methionyl-tRNA(fMet) + (6S)-5,6,7,8-tetrahydrofolate + H(+). In terms of biological role, attaches a formyl group to the free amino group of methionyl-tRNA(fMet). The formyl group appears to play a dual role in the initiator identity of N-formylmethionyl-tRNA by promoting its recognition by IF2 and preventing the misappropriation of this tRNA by the elongation apparatus. This is Methionyl-tRNA formyltransferase from Listeria welshimeri serovar 6b (strain ATCC 35897 / DSM 20650 / CCUG 15529 / CIP 8149 / NCTC 11857 / SLCC 5334 / V8).